A 376-amino-acid chain; its full sequence is MNAITSASAIRTVHVPLGERAYDILIGPGLIARAGAEIASRLKGRKAAVVTDENVAPLYLKALVASLDEAGIASAEVVLPAGEKTKSFEHLITACDKLLEARVERNDYVIALGGGVIGDLSGFAAGIVRRGVRFVQVPTSLLSQVDSSVGGKTGINSRHGKNLIGVFHQPDLVLADTDVLNSLSEREFRAGYAEVAKYGLIDKPDFFAWLEANWKSVFTGGSARIEAIAASCQAKADVVVADERENGQRALLNLGHTFGHALEAATAYDSSRLVHGEGVSIGMVLAYEFSARMNLASPDDARRVERHLKEVGLPTRMSDIPGDLPPAETLMDAIAQDKKVKSGKLTFILTRGIGQSFVADDVPASEVISFLREKHA.

Residues 115-119 (GVIGD), 139-140 (TS), Lys-152, and Lys-161 each bind NAD(+). Residues Glu-194, His-256, and His-275 each contribute to the Zn(2+) site.

This sequence belongs to the sugar phosphate cyclases superfamily. Dehydroquinate synthase family. Requires Co(2+) as cofactor. The cofactor is Zn(2+). It depends on NAD(+) as a cofactor.

It localises to the cytoplasm. The catalysed reaction is 7-phospho-2-dehydro-3-deoxy-D-arabino-heptonate = 3-dehydroquinate + phosphate. Its pathway is metabolic intermediate biosynthesis; chorismate biosynthesis; chorismate from D-erythrose 4-phosphate and phosphoenolpyruvate: step 2/7. Catalyzes the conversion of 3-deoxy-D-arabino-heptulosonate 7-phosphate (DAHP) to dehydroquinate (DHQ). This chain is 3-dehydroquinate synthase, found in Rhizobium johnstonii (strain DSM 114642 / LMG 32736 / 3841) (Rhizobium leguminosarum bv. viciae).